Here is a 363-residue protein sequence, read N- to C-terminus: Pyrimidine monooxygenase RutA (363 aa).

FMN contacts are provided by residues 49–50 (IK), Asn-115, Glu-124, 140–141 (RY), and Ser-190.

Belongs to the NtaA/SnaA/DszA monooxygenase family. RutA subfamily.

It carries out the reaction uracil + FMNH2 + NADH + O2 = (Z)-3-ureidoacrylate + FMN + NAD(+) + H2O + H(+). It catalyses the reaction thymine + FMNH2 + NADH + O2 = (Z)-2-methylureidoacrylate + FMN + NAD(+) + H2O + H(+). In terms of biological role, catalyzes the pyrimidine ring opening between N-3 and C-4 by an unusual flavin hydroperoxide-catalyzed mechanism, adding oxygen atoms in the process to yield ureidoacrylate peracid, that immediately reacts with FMN forming ureidoacrylate and FMN-N(5)-oxide. The FMN-N(5)-oxide reacts spontaneously with NADH to produce FMN. Requires the flavin reductase RutF to regenerate FMN in vivo. The chain is Pyrimidine monooxygenase RutA from Escherichia coli O127:H6 (strain E2348/69 / EPEC).